Here is an 888-residue protein sequence, read N- to C-terminus: E3 ubiquitin-protein ligase SH3RF1 (888 aa).

The RING-type zinc finger occupies 12 to 53; the sequence is CPVCLERLDASAKVLPCQHTFCKRCLLGIVGSRNELRCPECR. 2 consecutive SH3 domains span residues 134–193 and 196–259; these read PQLP…IIKP and QPPP…FNSA. The interval 275-321 is disordered; the sequence is DAGECSSAAAQSSTAPKHSDTKKNTKKRHSFTSLTMANKSSQASQNR. The segment at 292 to 362 is interaction with RAC1; sequence HSDTKKNTKK…APSQVHISTT (71 aa). Residue Ser-304 is modified to Phosphoserine. Residues 305–321 show a composition bias toward polar residues; sequence FTSLTMANKSSQASQNR. Residues 440–543 form an interaction with AKT2 region; the sequence is HLRPQTRPSV…STAGGPAQKL (104 aa). One can recognise an SH3 3 domain in the interval 445-506; the sequence is TRPSVYVAIY…PGNYVAPVTR (62 aa). Disordered stretches follow at residues 516 to 549, 617 to 637, and 693 to 741; these read VPMSTAGQTSRGVTMVSPSTAGGPAQKLQGNGVA, SPASVGLPHHSLASPQPAPLM, and PDSA…ASPT. Over residues 520-535 the composition is skewed to polar residues; it reads TAGQTSRGVTMVSPST. Ser-532 is subject to Phosphoserine. Over residues 693 to 704 the composition is skewed to polar residues; it reads PDSASLACGNSS. Residues 707-718 are compositionally biased toward basic and acidic residues; sequence KPDKDSKKEKKG. Ser-735 carries the post-translational modification Phosphoserine. In terms of domain architecture, SH3 4 spans 829–888; it reads VVCERHRVVVSYPPQSEAELELKEGDIVFVHKKREDGWFKGTLQRNGKTGLFPGSFVENI.

The protein belongs to the SH3RF family. In terms of assembly, interacts with HERP1. Interacts with RAC1; in a GTP-dependent manner. Interacts with MAP3K10/MLK2 and MAP3K11/MLK3. Interacts with MAPK8IP; this interaction leads to the PJAC complex (POSH-JIP or SH3RF1/MAPK8IP apoptotic complex) with a 1:1 ratio. Interacts with SIAH1. Probably part of a signaling complex that may contain SH3RF1, MAPK8IP, DLK1, MAP2K4/MKK4, MAP2K7/MKK7, MAPK8/JNK1, MAPK9/JNK2, AKT1 and AKT2. Found in a complex with RAC2, MAP3K7/TAK1, MAP2K7/MKK7, MAPK8IP1/JIP1, MAPK8/JNK1 and MAPK9/JNK2. Found in a complex with RAC1, MAP3K11/MLK3, MAP2K7/MKK7, MAPK8IP1/JIP1 and MAPK8/JNK1. Interacts with SH3RF2. Post-translationally, phosphorylated at Ser-304 by AKT1 and AKT2. When phosphorylated, it has reduced ability to bind Rac. In terms of processing, autoubiquitinated. Ubiquitinated by SH3RF2, leading to proteasome-mediated degradation.

The protein resides in the cytoplasm. It is found in the perinuclear region. It localises to the cell projection. Its subcellular location is the lamellipodium. The protein localises to the golgi apparatus. The protein resides in the trans-Golgi network. It carries out the reaction S-ubiquitinyl-[E2 ubiquitin-conjugating enzyme]-L-cysteine + [acceptor protein]-L-lysine = [E2 ubiquitin-conjugating enzyme]-L-cysteine + N(6)-ubiquitinyl-[acceptor protein]-L-lysine.. The protein operates within protein modification; protein ubiquitination. In terms of biological role, has E3 ubiquitin-protein ligase activity. In the absence of an external substrate, it can catalyze self-ubiquitination. Stimulates ubiquitination of potassium channel KCNJ1, enhancing it's dynamin-dependent and clathrin-independent endocytosis. Acts as a scaffold protein that coordinates with MAPK8IP1/JIP1 in organizing different components of the JNK pathway, including RAC1 or RAC2, MAP3K11/MLK3 or MAP3K7/TAK1, MAP2K7/MKK7, MAPK8/JNK1 and/or MAPK9/JNK2 into a functional multiprotein complex to ensure the effective activation of the JNK signaling pathway. Regulates the differentiation of CD4(+) and CD8(+) T-cells and promotes T-helper 1 (Th1) cell differentiation. Regulates the activation of MAPK8/JNK1 and MAPK9/JNK2 in CD4(+) T-cells and the activation of MAPK8/JNK1 in CD8(+) T-cells. Controls proper cortical neuronal migration and the formation of proximal cytoplasmic dilation in the leading process (PCDLP) in migratory neocortical neurons by regulating the proper localization of activated RAC1 and F-actin assembly. The polypeptide is E3 ubiquitin-protein ligase SH3RF1 (SH3RF1) (Pongo abelii (Sumatran orangutan)).